The sequence spans 364 residues: Histidinol-phosphate aminotransferase (364 aa).

An N6-(pyridoxal phosphate)lysine modification is found at Lys226.

This sequence belongs to the class-II pyridoxal-phosphate-dependent aminotransferase family. Histidinol-phosphate aminotransferase subfamily. In terms of assembly, homodimer. Pyridoxal 5'-phosphate is required as a cofactor.

It catalyses the reaction L-histidinol phosphate + 2-oxoglutarate = 3-(imidazol-4-yl)-2-oxopropyl phosphate + L-glutamate. Its pathway is amino-acid biosynthesis; L-histidine biosynthesis; L-histidine from 5-phospho-alpha-D-ribose 1-diphosphate: step 7/9. The sequence is that of Histidinol-phosphate aminotransferase from Campylobacter jejuni subsp. jejuni serotype O:23/36 (strain 81-176).